A 466-amino-acid chain; its full sequence is Soluble pyridine nucleotide transhydrogenase (466 aa).

36–45 (ERYHNVGGGC) serves as a coordination point for FAD.

It belongs to the class-I pyridine nucleotide-disulfide oxidoreductase family. Requires FAD as cofactor.

It is found in the cytoplasm. The catalysed reaction is NAD(+) + NADPH = NADH + NADP(+). In terms of biological role, conversion of NADPH, generated by peripheral catabolic pathways, to NADH, which can enter the respiratory chain for energy generation. This chain is Soluble pyridine nucleotide transhydrogenase, found in Salmonella gallinarum (strain 287/91 / NCTC 13346).